We begin with the raw amino-acid sequence, 203 residues long: WUSCHEL-related homeobox 3 (203 aa).

The segment at residues 4-68 (TPSTRWCPTP…NHKARERQRL (65 aa)) is a DNA-binding region (homeobox; WUS-type). Disordered regions lie at residues 73–95 (CARH…TAAA), 109–135 (LHHH…QQQQ), and 180–203 (STSG…TSTN). The segment covering 80–91 (PSPPSSTVPPAP) has biased composition (pro residues). A compositionally biased stretch (basic residues) spans 109–118 (LHHHHHHHHP). 2 stretches are compositionally biased toward low complexity: residues 119–135 (YAAA…QQQQ) and 190–203 (CSSS…TSTN).

It belongs to the WUS homeobox family.

The protein localises to the nucleus. In terms of biological role, transcription factor which may be involved in developmental processes. This Oryza sativa subsp. indica (Rice) protein is WUSCHEL-related homeobox 3 (WOX3).